The chain runs to 322 residues: Pilin gene-inverting protein (322 aa).

Its function is as follows. May be the site-specific invertase required for pilin gene inversion. Moraxella can express either a Q or I pilin; the inversion of 2 kb of DNA determines which pilin is expressed. This chain is Pilin gene-inverting protein (piv), found in Moraxella lacunata.